The primary structure comprises 360 residues: Isopentenyl-diphosphate delta-isomerase (360 aa).

6–7 provides a ligand contact to substrate; it reads RK. Residues threonine 62, 63 to 65, serine 93, and asparagine 122 each bind FMN; that span reads GMT. 93–95 contributes to the substrate binding site; that stretch reads SQR. A substrate-binding site is contributed by glutamine 157. Position 158 (glutamate 158) interacts with Mg(2+). FMN-binding positions include lysine 189, serine 214, threonine 219, 272–274, and 293–294; these read GIR and AL.

Belongs to the IPP isomerase type 2 family. In terms of assembly, homooctamer. Dimer of tetramers. Requires FMN as cofactor. NADPH serves as cofactor. The cofactor is Mg(2+).

The protein localises to the cytoplasm. The enzyme catalyses isopentenyl diphosphate = dimethylallyl diphosphate. In terms of biological role, involved in the biosynthesis of isoprenoids. Catalyzes the 1,3-allylic rearrangement of the homoallylic substrate isopentenyl (IPP) to its allylic isomer, dimethylallyl diphosphate (DMAPP). The polypeptide is Isopentenyl-diphosphate delta-isomerase (Ignicoccus hospitalis (strain KIN4/I / DSM 18386 / JCM 14125)).